The sequence spans 81 residues: uncharacterized protein (81 aa).

This is an uncharacterized protein from Archaeoglobus fulgidus (strain ATCC 49558 / DSM 4304 / JCM 9628 / NBRC 100126 / VC-16).